A 105-amino-acid polypeptide reads, in one-letter code: Protein FAM24A (105 aa).

An N-terminal signal peptide occupies residues 1–32 (MAKMFDLRTKIMIGIGSSLLVAAMVLLSVVFC).

It belongs to the FAM24 family.

The protein localises to the secreted. The protein is Protein FAM24A (FAM24A) of Homo sapiens (Human).